We begin with the raw amino-acid sequence, 706 residues long: K(+)-insensitive pyrophosphate-energized proton pump (706 aa).

The next 5 helical transmembrane spans lie at 1-21 (MTAL…AIWA), 62-82 (VVIF…GFAI), 83-103 (GAIL…RANV), 129-149 (LLVA…LIHF), and 164-184 (VALG…GGIF). K186 serves as a coordination point for substrate. D189, D193, N216, and D219 together coordinate Mg(2+). Helical transmembrane passes span 231-251 (LFET…IFFG), 263-283 (TLPL…TFFV), 300-320 (IATG…LIGF), 330-350 (GLAL…IIWI), 393-413 (IVII…GIAI), and 414-434 (ATTT…FGPV). D436 provides a ligand contact to Mg(2+). 4 consecutive transmembrane segments (helical) span residues 467–487 (AVTK…LFAA), 516–536 (YVVV…AMGM), 585–605 (IIPS…IYAI), and 616–636 (AFSA…FVAI). Residues D646, D672, and D676 each coordinate Ca(2+). K679 is a substrate binding site. The helical transmembrane segment at 685-705 (AVNPMIKITNIVALLLLAILA) threads the bilayer.

This sequence belongs to the H(+)-translocating pyrophosphatase (TC 3.A.10) family. K(+)-insensitive subfamily. In terms of assembly, homodimer. Requires Mg(2+) as cofactor.

The protein localises to the cell inner membrane. It carries out the reaction diphosphate + H2O + H(+)(in) = 2 phosphate + 2 H(+)(out). In terms of biological role, proton pump that utilizes the energy of pyrophosphate hydrolysis as the driving force for proton movement across the membrane. Generates a proton motive force. The sequence is that of K(+)-insensitive pyrophosphate-energized proton pump from Rhodopseudomonas palustris (strain ATCC BAA-98 / CGA009).